The sequence spans 284 residues: UPF0276 protein PA3283 (284 aa).

It belongs to the UPF0276 family.

The chain is UPF0276 protein PA3283 from Pseudomonas aeruginosa (strain ATCC 15692 / DSM 22644 / CIP 104116 / JCM 14847 / LMG 12228 / 1C / PRS 101 / PAO1).